Reading from the N-terminus, the 354-residue chain is Inactive ADP-ribosyltransferase arh2 (354 aa).

Belongs to the ADP-ribosylglycohydrolase family. Expressed in heart (at protein level). A short form is detected in both heart and tadpole tail (at protein level).

It is found in the cytoplasm. Its subcellular location is the myofibril. The protein localises to the sarcomere. Functionally, required for myofibril assembly and outgrowth of the cardiac chambers in the developing heart. Appears to be catalytically inactive, showing no activity against O-acetyl-ADP-ribose. The protein is Inactive ADP-ribosyltransferase arh2 (adprhl1) of Xenopus laevis (African clawed frog).